A 545-amino-acid chain; its full sequence is Eukaryotic translation initiation factor 3 subunit D-2 (545 aa).

Positions 94-148 (FQRGRFRGNTRNNPRTRGRTGRGGAVTGTGGNQPGVGVNERTKYGKGRDNRRQMG) are disordered. A compositionally biased stretch (basic residues) spans 95 to 113 (QRGRFRGNTRNNPRTRGRT). The segment covering 114 to 127 (GRGGAVTGTGGNQP) has biased composition (gly residues). Basic and acidic residues predominate over residues 133–145 (ERTKYGKGRDNRR). The interval 287–301 (QFDLLTVNETALEPP) is RNA gate.

Belongs to the eIF-3 subunit D family. As to quaternary structure, component of the eukaryotic translation initiation factor 3 (eIF-3) complex. The eIF-3 complex interacts with pix.

The protein resides in the cytoplasm. In terms of biological role, mRNA cap-binding component of the eukaryotic translation initiation factor 3 (eIF-3) complex, which is involved in protein synthesis of a specialized repertoire of mRNAs and, together with other initiation factors, stimulates binding of mRNA and methionyl-tRNAi to the 40S ribosome. The eIF-3 complex specifically targets and initiates translation of a subset of mRNAs involved in cell proliferation. In the eIF-3 complex, eif3d specifically recognizes and binds the 7-methylguanosine cap of a subset of mRNAs. This chain is Eukaryotic translation initiation factor 3 subunit D-2, found in Drosophila pseudoobscura pseudoobscura (Fruit fly).